The following is a 561-amino-acid chain: Potassium-transporting ATPase potassium-binding subunit (561 aa).

A run of 10 helical transmembrane segments spans residues 4–24 (IVMQ…PLGI), 65–85 (AVSV…VLML), 133–153 (IGLT…LFAV), 177–197 (LYIL…QGVV), 253–273 (FTNL…VVMF), 285–305 (AIMT…TISE), 380–400 (GLYG…LLVG), 417–437 (MVCL…AVAV), 484–504 (MVGA…ALYL), and 528–548 (FIGL…LPAL).

It belongs to the KdpA family. The system is composed of three essential subunits: KdpA, KdpB and KdpC.

It localises to the cell membrane. Its function is as follows. Part of the high-affinity ATP-driven potassium transport (or Kdp) system, which catalyzes the hydrolysis of ATP coupled with the electrogenic transport of potassium into the cytoplasm. This subunit binds the extracellular potassium ions and delivers the ions to the membrane domain of KdpB through an intramembrane tunnel. The chain is Potassium-transporting ATPase potassium-binding subunit from Listeria monocytogenes serotype 4b (strain CLIP80459).